The primary structure comprises 320 residues: Putative GDP-polyphosphate phosphotransferase PKK2A (320 aa).

Disordered stretches follow at residues 1 to 21, 246 to 267, and 281 to 320; these read MRKK…PKLD, RPLP…PPRD, and EERI…KSKK. A compositionally biased stretch (basic and acidic residues) spans 12–21; sequence DFRKNPPKLD. A compositionally biased stretch (basic and acidic residues) spans 281–290; that stretch reads EERIKKEEKA.

Belongs to the polyphosphate kinase 2 (PPK2) family. Class I subfamily.

It catalyses the reaction [phosphate](n) + GTP = [phosphate](n+1) + GDP. The polypeptide is Putative GDP-polyphosphate phosphotransferase PKK2A (Corynebacterium glutamicum (strain ATCC 13032 / DSM 20300 / JCM 1318 / BCRC 11384 / CCUG 27702 / LMG 3730 / NBRC 12168 / NCIMB 10025 / NRRL B-2784 / 534)).